The following is a 499-amino-acid chain: Spore germination protein GerQA (499 aa).

The next 3 helical transmembrane spans lie at 285–305 (LFAF…LTYH), 376–396 (SNVL…APIY), and 409–429 (FIIS…SLLL).

The protein belongs to the GerABKA family.

Its subcellular location is the membrane. Functionally, required for the germination response to inosine. Has no role in L-alanine germination. The sequence is that of Spore germination protein GerQA (gerQA) from Bacillus cereus.